Consider the following 414-residue polypeptide: tRNA N6-adenosine threonylcarbamoyltransferase, mitochondrial (414 aa).

The transit peptide at 1–29 (MLMLRRTAGAIPKPPKSKVYGFLRRFSVH) directs the protein to the mitochondrion. N6-acetyllysine occurs at positions 74 and 140. A divalent metal cation-binding residues include His-147 and His-151. Substrate contacts are provided by residues 169–173 (LISGG) and Asp-202. Position 203 is an N6-acetyllysine (Lys-203). Substrate is bound by residues Gly-222 and Glu-226. 2 positions are modified to N6-acetyllysine: Lys-230 and Lys-299. Residues 329 to 330 (SN) and Thr-357 each bind substrate. Asp-358 lines the a divalent metal cation pocket.

Belongs to the KAE1 / TsaD family. Monomer. A divalent metal cation serves as cofactor.

It is found in the mitochondrion. It carries out the reaction L-threonylcarbamoyladenylate + adenosine(37) in tRNA = N(6)-L-threonylcarbamoyladenosine(37) in tRNA + AMP + H(+). Functionally, required for the formation of a threonylcarbamoyl group on adenosine at position 37 (t(6)A37) in mitochondrial tRNAs that read codons beginning with adenine. Probably involved in the transfer of the threonylcarbamoyl moiety of threonylcarbamoyl-AMP (TC-AMP) to the N6 group of A37. Involved in mitochondrial genome maintenance. This chain is tRNA N6-adenosine threonylcarbamoyltransferase, mitochondrial, found in Mus musculus (Mouse).